A 233-amino-acid polypeptide reads, in one-letter code: Orotidine 5'-phosphate decarboxylase (233 aa).

Substrate contacts are provided by residues Asp11, Lys33, 60–69, Thr120, Arg181, Gln190, Gly210, and Arg211; that span reads DLKFHDIPNT. Lys62 functions as the Proton donor in the catalytic mechanism.

The protein belongs to the OMP decarboxylase family. Type 1 subfamily. In terms of assembly, homodimer.

The enzyme catalyses orotidine 5'-phosphate + H(+) = UMP + CO2. It participates in pyrimidine metabolism; UMP biosynthesis via de novo pathway; UMP from orotate: step 2/2. In terms of biological role, catalyzes the decarboxylation of orotidine 5'-monophosphate (OMP) to uridine 5'-monophosphate (UMP). The sequence is that of Orotidine 5'-phosphate decarboxylase from Vibrio campbellii (strain ATCC BAA-1116).